Here is a 229-residue protein sequence, read N- to C-terminus: UPF0758 protein MM_2791 (229 aa).

The 123-residue stretch at 106–228 (KISSPKDVYT…YVSLKDEGFV (123 aa)) folds into the MPN domain. Residues His177, His179, and Asp190 each coordinate Zn(2+). The JAMM motif signature appears at 177-190 (HNHPSGDPSPSRED).

The protein belongs to the UPF0758 family.

The sequence is that of UPF0758 protein MM_2791 from Methanosarcina mazei (strain ATCC BAA-159 / DSM 3647 / Goe1 / Go1 / JCM 11833 / OCM 88) (Methanosarcina frisia).